The primary structure comprises 169 residues: Ribosome maturation factor RimM (169 aa).

The PRC barrel domain maps to 97–169 (EDEVYFKDLI…KIVVDWEYDY (73 aa)).

It belongs to the RimM family. Binds ribosomal protein uS19.

It is found in the cytoplasm. Functionally, an accessory protein needed during the final step in the assembly of 30S ribosomal subunit, possibly for assembly of the head region. Essential for efficient processing of 16S rRNA. May be needed both before and after RbfA during the maturation of 16S rRNA. It has affinity for free ribosomal 30S subunits but not for 70S ribosomes. The sequence is that of Ribosome maturation factor RimM from Francisella tularensis subsp. holarctica (strain FTNF002-00 / FTA).